The sequence spans 83 residues: Large ribosomal subunit protein bL31B (83 aa).

This sequence belongs to the bacterial ribosomal protein bL31 family. Type B subfamily. Part of the 50S ribosomal subunit.

Binds the 23S rRNA. This chain is Large ribosomal subunit protein bL31B, found in Lactobacillus delbrueckii subsp. bulgaricus (strain ATCC 11842 / DSM 20081 / BCRC 10696 / JCM 1002 / NBRC 13953 / NCIMB 11778 / NCTC 12712 / WDCM 00102 / Lb 14).